The sequence spans 485 residues: MSKLLLVALFGAIAVVATSAEVLNLNGRSLLNNDDPNAFPYCKCTYRQRRSPYRLKYVGAENNYKGNDWLCYSIVLDTTGTVCQTVPLTEPCCSADLYKIEFDVKPSCKGTVTRAMVFKGIDRTVGGVRVLESISTVGIDDVTGVPGAAILRIVKDLALPYSVVASFLPNGLPVCINRVPGSCTFPELFMDVNGTASYSVFNSDKDCCPTGLSGPNVNPIGPAPNNSPLPPSPQPTASSRPPSPPPSPRPPSPPPPSPSPPPPPPPPPPPPPPPPPSPPPPPPPPPPPPPPPPPPSPSPPRKPPSPSPPVPPPPSPPSVLPAATGFPFCECVSRSPSSYPWRVTVANVSAVTISGGAGERVCLKISVDNAAAATCNNGLGGCCSDGLEKVELFANGKCKGSILPFTLSNTAEIRSSFSWDSTRPVLKFTRLGLTYAQGVAGGSLCFNIKGAGCTKFADLCPGRGCTVAVFNNPDNTCCPRVGTIA.

The signal sequence occupies residues 1–20 (MSKLLLVALFGAIAVVATSA). N-linked (GlcNAc...) asparagine glycosylation is present at asparagine 193. The interval 212-317 (LSGPNVNPIG…PPVPPPPSPP (106 aa)) is disordered. Composition is skewed to pro residues over residues 221 to 234 (GPAP…PSPQ) and 241 to 317 (PPSP…PSPP). Residue asparagine 347 is glycosylated (N-linked (GlcNAc...) asparagine).

Polymer. Post-translationally, intersubunit cross-links are formed between saccharide chains rather than between polypeptide chains. Hydroxylated on proline residues in the Pro-rich central domain. In terms of processing, glycosylated; contains sulfate-substituted glycans.

Functionally, the extracellular matrix (ECM) of Volvox contains insoluble fibrous layers that surround individual cells at a distance to form contiguous cellular compartments. SSG 185 is the monomeric precursor of this substructure (C3Z structure). This is Sulfated surface glycoprotein 185 from Volvox carteri (Green alga).